Consider the following 322-residue polypeptide: AB hydrolase superfamily protein FGSG_00044 (322 aa).

The region spanning 36–319 (RTTPKQPVAI…ITAEVRRIVK (284 aa)) is the AB hydrolase-1 domain.

It belongs to the AB hydrolase superfamily.

It functions in the pathway mycotoxin biosynthesis. In terms of biological role, AB hydrolase superfamily protein; part of the gene cluster that mediates the biosynthesis of gramillins A and B, bicyclic lipopeptides that induce cell death in maize leaves but not in wheat leaves. The nonribosomal peptide synthetase GRA1 incorporates respectively a glutamic adic (Glu), a leucine (Leu), a serine (Ser), a hydroxyglutamine (HOGln), a 2-amino decanoic acid, and 2 cysteins (CysB and CysA). The biosynthesis of 2-amino decanoic acid incorporated in gramillins could be initiated by a fatty acid synthase composed of the alpha and beta subunits FGSG_00036 and FGSG_11656. The cytochrome P450 monooxygenase FGSG_15680 could hydroxylate the fatty acid chain. Subsequent oxidation to the ketone by the oxidoreductase FGSG_00048 and transamination by aminotransferase FGSG_00049 could form 2-amino-decanoic acid. On the other hand, FGSG_15680 could also be responsible for the HO-modified glutamine at the gamma-position. Whether hydroxylation occurs on the fully assembled product or on the Gln residue prior to assembly into the gramillins requires further proof. The thioredoxin FGSG_00043 could also be required for the disulfide-bond formation between CysA and CysB. The specific involvement of the remaining proteins from the cluster is more difficult to discern, but could have broader regulatory (FGSG_00040 and FGSG_11657) or enzymatic functions (FGSG_00044 and FGSG_00045). The final C-domain of GRA1 does not possess the expected sequence of a termination CT domain, often implicated in macrocyclization and release of a cyclopeptidein fungal NRPs; and the thioesterase FGSG_00047 may act in concert with the terminal C-domain of GRA1 to catalyze the formation of the macrocyclic anhydride and release of the products. The sequence is that of AB hydrolase superfamily protein FGSG_00044 from Gibberella zeae (strain ATCC MYA-4620 / CBS 123657 / FGSC 9075 / NRRL 31084 / PH-1) (Wheat head blight fungus).